Consider the following 190-residue polypeptide: CDP-diacylglycerol--glycerol-3-phosphate 3-phosphatidyltransferase (190 aa).

Topologically, residues 6 to 17 (GVFNIPMYLTLF) are cytoplasmic. The helical transmembrane segment at 18 to 42 (RIIMVPCFVAVFYWPIYWSPMLCTL) threads the bilayer. Topologically, residues 43–65 (IFFIAAITDWFDGFLARRWNQTS) are periplasmic. The chain crosses the membrane as a helical span at residues 66–86 (RIGGFLDPIADKIMIITALIL). Residues 87-91 (ISEHF) are Cytoplasmic-facing. The chain crosses the membrane as a helical span at residues 92–112 (HVWWMTLPISSIIIREILISS). Topologically, residues 113-150 (LRECIARVDNKNNISVIWLSKVKTFAQMLALIALLCRL) are periplasmic. Residues 151–173 (NEWTVIMGVISLYTAMLLTLWSM) form a helical membrane-spanning segment. At 174–186 (CYYVYSVSSILLQ) the chain is on the cytoplasmic side.

Belongs to the CDP-alcohol phosphatidyltransferase class-I family.

Its subcellular location is the cell inner membrane. The catalysed reaction is a CDP-1,2-diacyl-sn-glycerol + sn-glycerol 3-phosphate = a 1,2-diacyl-sn-glycero-3-phospho-(1'-sn-glycero-3'-phosphate) + CMP + H(+). It functions in the pathway phospholipid metabolism; phosphatidylglycerol biosynthesis; phosphatidylglycerol from CDP-diacylglycerol: step 1/2. In terms of biological role, catalyzes the conversion of cytidine diphosphate diacylglycerol (CDP-DG) and glycerol 3-phosphate into phosphatidylglycerol. Essential for the synthesis of anionic phospholipids, thereby playing a role in balancing the ratio of zwitterionic and anionic phospholipids, which is thought to be important for normal membrane function. The sequence is that of CDP-diacylglycerol--glycerol-3-phosphate 3-phosphatidyltransferase from Blochmanniella floridana.